The following is a 134-amino-acid chain: Profilin-4 (134 aa).

An intrachain disulfide couples C13 to C118. Residues 84–100 carry the Involved in PIP2 interaction motif; it reads AVIRGKKGSGGITIKKT. Position 114 is a phosphothreonine (T114).

This sequence belongs to the profilin family. As to quaternary structure, occurs in many kinds of cells as a complex with monomeric actin in a 1:1 ratio. Post-translationally, phosphorylated by MAP kinases.

It is found in the cytoplasm. The protein resides in the cytoskeleton. Functionally, binds to actin and affects the structure of the cytoskeleton. At high concentrations, profilin prevents the polymerization of actin, whereas it enhances it at low concentrations. The polypeptide is Profilin-4 (Olea europaea (Common olive)).